Consider the following 296-residue polypeptide: Protoheme IX farnesyltransferase (296 aa).

9 consecutive transmembrane segments (helical) span residues 11–31, 35–55, 84–104, 107–127, 132–152, 162–182, 208–228, 229–249, and 264–284; these read PGII…AAQG, YPLF…GCVF, VTLV…YIAA, LAMW…SLYM, VYGT…GYCA, LILL…IAIF, ITLY…GGYA, GYKY…MALS, and LFVF…VDSM.

Belongs to the UbiA prenyltransferase family. Protoheme IX farnesyltransferase subfamily.

It is found in the cell inner membrane. The enzyme catalyses heme b + (2E,6E)-farnesyl diphosphate + H2O = Fe(II)-heme o + diphosphate. Its pathway is porphyrin-containing compound metabolism; heme O biosynthesis; heme O from protoheme: step 1/1. Functionally, converts heme B (protoheme IX) to heme O by substitution of the vinyl group on carbon 2 of heme B porphyrin ring with a hydroxyethyl farnesyl side group. In Pectobacterium carotovorum subsp. carotovorum (strain PC1), this protein is Protoheme IX farnesyltransferase.